The following is a 216-amino-acid chain: uncharacterized protein (216 aa).

4 helical membrane-spanning segments follow: residues 5 to 27, 98 to 120, 125 to 147, and 185 to 207; these read ISLI…IAFS, FLSF…VFLL, VLIW…TFTN, and GTLF…GILG.

Its subcellular location is the cell membrane. This is an uncharacterized protein from Aquifex aeolicus (strain VF5).